Here is a 177-residue protein sequence, read N- to C-terminus: Large ribosomal subunit protein uL5 (177 aa).

Belongs to the universal ribosomal protein uL5 family. Part of the 50S ribosomal subunit; part of the 5S rRNA/L5/L18/L25 subcomplex. Contacts the 5S rRNA and the P site tRNA. Forms a bridge to the 30S subunit in the 70S ribosome.

Its function is as follows. This is one of the proteins that bind and probably mediate the attachment of the 5S RNA into the large ribosomal subunit, where it forms part of the central protuberance. In the 70S ribosome it contacts protein S13 of the 30S subunit (bridge B1b), connecting the 2 subunits; this bridge is implicated in subunit movement. Contacts the P site tRNA; the 5S rRNA and some of its associated proteins might help stabilize positioning of ribosome-bound tRNAs. In Ehrlichia ruminantium (strain Welgevonden), this protein is Large ribosomal subunit protein uL5.